The sequence spans 609 residues: UvrABC system protein C (609 aa).

One can recognise a GIY-YIG domain in the interval 13-91 (HQPGVYRMFD…IKAFQPRYNV (79 aa)). The region spanning 201–236 (QQVLEHLIKKMEQASMQLNFEQAAYFRDQIQAIRAV) is the UVR domain.

The protein belongs to the UvrC family. As to quaternary structure, interacts with UvrB in an incision complex.

It localises to the cytoplasm. The UvrABC repair system catalyzes the recognition and processing of DNA lesions. UvrC both incises the 5' and 3' sides of the lesion. The N-terminal half is responsible for the 3' incision and the C-terminal half is responsible for the 5' incision. In Histophilus somni (strain 129Pt) (Haemophilus somnus), this protein is UvrABC system protein C.